A 572-amino-acid polypeptide reads, in one-letter code: Cleavage stimulation factor subunit 2 (572 aa).

Serine 14 carries the phosphoserine modification. Residues 16–94 (RSVFVGNIPY…RALRVDNAAS (79 aa)) enclose the RRM domain. An interactions with CSTF3 and SYMPK region spans residues 108–248 (APVIESPYGE…VNGAPPLMQA (141 aa)). Lysine 189 is covalently cross-linked (Glycyl lysine isopeptide (Lys-Gly) (interchain with G-Cter in SUMO2)). The tract at residues 208–230 (VHSAGPGSGSSVSMNQQNPQTPQ) is disordered. Arginine 308 carries the post-translational modification Omega-N-methylarginine. Residues 322–382 (LGDAPNDPRG…RGGPLTEPRP (61 aa)) are disordered. The segment covering 360 to 373 (PGHDSRGPPPHEMR) has biased composition (basic and acidic residues). One copy of the 1; approximate repeat lies at 410–414 (IDARA). The segment at 410–464 (IDARAMEARGLDARGLEARAMEARAMEARAMEARAMEARAMEVRGMEARSMDTRG) is 11 X 5 AA tandem repeats of M-E-A-R-[AG]. The stretch at 415–419 (MEARG) is repeat 2. The 3; approximate repeat unit spans residues 420–424 (LDARG). The 4; approximate repeat unit spans residues 425–429 (LEARA). 4 consecutive repeat copies span residues 430–434 (MEARA), 435–439 (MEARA), 440–444 (MEARA), and 445–449 (MEARA). A 9; approximate repeat occupies 450 to 454 (MEVRG). Copy 10 of the repeat occupies 455–459 (MEARS). Residues 460-464 (MDTRG) form an 11; approximate repeat. Omega-N-methylarginine occurs at positions 463 and 470. An interaction with RPO2TC1 region spans residues 509–572 (IQGGGQPGGF…EQIQKSTGAP (64 aa)). Serine 519 carries the phosphoserine modification.

As to quaternary structure, the CSTF complex is composed of CSTF1 (50 kDa subunit), CSTF2 (64 kDa subunit) and CSTF3 (77 kDa subunit). CSTF2 directly interacts with CSTF3, SYMPK and RPO2TC1. Interacts with HSF1 in heat-stressed cells. Interacts with CPSF2, CPSF3 and FIP1L1. Interacts with DDX1.

It localises to the nucleus. Functionally, one of the multiple factors required for polyadenylation and 3'-end cleavage of mammalian pre-mRNAs. This subunit is directly involved in the binding to pre-mRNAs. This Bos taurus (Bovine) protein is Cleavage stimulation factor subunit 2 (CSTF2).